The following is a 341-amino-acid chain: Uroporphyrinogen decarboxylase (341 aa).

Residues 23 to 27 (RQAGR), Phe42, Asp73, Tyr148, Ser203, and His318 each bind substrate.

This sequence belongs to the uroporphyrinogen decarboxylase family. As to quaternary structure, homodimer.

The protein resides in the cytoplasm. The enzyme catalyses uroporphyrinogen III + 4 H(+) = coproporphyrinogen III + 4 CO2. Its pathway is porphyrin-containing compound metabolism; protoporphyrin-IX biosynthesis; coproporphyrinogen-III from 5-aminolevulinate: step 4/4. Its function is as follows. Catalyzes the decarboxylation of four acetate groups of uroporphyrinogen-III to yield coproporphyrinogen-III. This chain is Uroporphyrinogen decarboxylase, found in Brucella melitensis biotype 1 (strain ATCC 23456 / CCUG 17765 / NCTC 10094 / 16M).